A 254-amino-acid polypeptide reads, in one-letter code: Ribose-5-phosphate isomerase A (254 aa).

Substrate contacts are provided by residues 45–48 (TGST), 105–108 (DGAD), and 118–121 (KGGG). The Proton acceptor role is filled by glutamate 127. Lysine 145 provides a ligand contact to substrate.

This sequence belongs to the ribose 5-phosphate isomerase family. As to quaternary structure, homodimer.

The enzyme catalyses aldehydo-D-ribose 5-phosphate = D-ribulose 5-phosphate. It participates in carbohydrate degradation; pentose phosphate pathway; D-ribose 5-phosphate from D-ribulose 5-phosphate (non-oxidative stage): step 1/1. Its function is as follows. Catalyzes the reversible conversion of ribose-5-phosphate to ribulose 5-phosphate. The polypeptide is Ribose-5-phosphate isomerase A (Treponema pallidum subsp. pallidum (strain SS14)).